The following is a 319-amino-acid chain: ATP-dependent 6-phosphofructokinase (319 aa).

An ATP-binding site is contributed by Gly11. Residues 21–25 (RSVVR) and Asp59 contribute to the ADP site. ATP is bound by residues 72 to 73 (RC) and 102 to 105 (GDGS). Asp103 contacts Mg(2+). A substrate-binding site is contributed by 125-127 (TID). Asp127 functions as the Proton acceptor in the catalytic mechanism. Arg154 provides a ligand contact to ADP. Residues Arg162 and 169–171 (MGR) contribute to the substrate site. ADP-binding positions include 185–187 (GAE), Arg211, and 213–215 (KKH). Substrate is bound by residues Glu222, Arg243, and 249–252 (HVQR).

This sequence belongs to the phosphofructokinase type A (PFKA) family. ATP-dependent PFK group I subfamily. Prokaryotic clade 'B1' sub-subfamily. In terms of assembly, homotetramer. Mg(2+) is required as a cofactor.

The protein resides in the cytoplasm. The enzyme catalyses beta-D-fructose 6-phosphate + ATP = beta-D-fructose 1,6-bisphosphate + ADP + H(+). Its pathway is carbohydrate degradation; glycolysis; D-glyceraldehyde 3-phosphate and glycerone phosphate from D-glucose: step 3/4. Allosterically activated by ADP and other diphosphonucleosides, and allosterically inhibited by phosphoenolpyruvate. In terms of biological role, catalyzes the phosphorylation of D-fructose 6-phosphate to fructose 1,6-bisphosphate by ATP, the first committing step of glycolysis. The chain is ATP-dependent 6-phosphofructokinase from Geobacillus stearothermophilus (Bacillus stearothermophilus).